The sequence spans 492 residues: UPF0236 protein TTE0402 (492 aa).

It belongs to the UPF0236 family.

The protein is UPF0236 protein TTE0402 of Caldanaerobacter subterraneus subsp. tengcongensis (strain DSM 15242 / JCM 11007 / NBRC 100824 / MB4) (Thermoanaerobacter tengcongensis).